The sequence spans 383 residues: Heterogeneous nuclear rnp K-like protein 2 (383 aa).

KH domains lie at 58–122, 161–226, and 256–321; these read NITF…LGQV, IGNL…INEI, and QVSQ…QTML. A disordered region spans residues 332–383; that stretch reads REEHEASLKDGSSVPAAAAASAATSISASGANQNDSIHTPVSDNESPVVFTE. A compositionally biased stretch (low complexity) spans 343–362; that stretch reads SSVPAAAAASAATSISASGA. Over residues 363-376 the composition is skewed to polar residues; sequence NQNDSIHTPVSDNE.

It belongs to the HEK2 family. In terms of assembly, binds RNA.

The protein localises to the cytoplasm. Its subcellular location is the P-body. It is found in the nucleus. It localises to the chromosome. The protein resides in the telomere. In terms of biological role, RNA-binding protein involved in the correct localization of transcripts in the cell. RNA localization is a widespread mechanism for achieving localized protein synthesis. Involved in structural and functional organization of telomeric chromatin and regulates silencing at the HMR locus. The chain is Heterogeneous nuclear rnp K-like protein 2 (HEK2) from Kluyveromyces lactis (strain ATCC 8585 / CBS 2359 / DSM 70799 / NBRC 1267 / NRRL Y-1140 / WM37) (Yeast).